The chain runs to 705 residues: Ribosomal RNA large subunit methyltransferase K/L (705 aa).

The 112-residue stretch at 43–154 (VVYRCCLWSR…GEKGILGFDL (112 aa)) folds into the THUMP domain.

Belongs to the methyltransferase superfamily. RlmKL family.

The protein localises to the cytoplasm. The enzyme catalyses guanosine(2445) in 23S rRNA + S-adenosyl-L-methionine = N(2)-methylguanosine(2445) in 23S rRNA + S-adenosyl-L-homocysteine + H(+). The catalysed reaction is guanosine(2069) in 23S rRNA + S-adenosyl-L-methionine = N(2)-methylguanosine(2069) in 23S rRNA + S-adenosyl-L-homocysteine + H(+). Functionally, specifically methylates the guanine in position 2445 (m2G2445) and the guanine in position 2069 (m7G2069) of 23S rRNA. The protein is Ribosomal RNA large subunit methyltransferase K/L of Aliivibrio fischeri (strain ATCC 700601 / ES114) (Vibrio fischeri).